The sequence spans 282 residues: sn-glycerol-3-phosphate transport system permease protein UgpE (282 aa).

A run of 6 helical transmembrane segments spans residues 14 to 34 (LILI…FVAS), 86 to 106 (MAIA…IVFF), 112 to 132 (MFFF…RILP), 146 to 168 (YAGL…QFFL), 201 to 221 (IAAL…WPLL), and 248 to 268 (WNYV…VVVL). One can recognise an ABC transmembrane type-1 domain in the interval 78-269 (LWNSFVVAMA…IPPILVVVLM (192 aa)).

Belongs to the binding-protein-dependent transport system permease family. In terms of assembly, the complex is composed of two ATP-binding proteins (UgpC), two transmembrane proteins (UgpA and UgpE) and a solute-binding protein (UgpB).

Its subcellular location is the cell inner membrane. Its function is as follows. Part of the ABC transporter complex UgpBAEC involved in sn-glycerol-3-phosphate (G3P) import. Probably responsible for the translocation of the substrate across the membrane. This chain is sn-glycerol-3-phosphate transport system permease protein UgpE (ugpE), found in Brucella suis biovar 1 (strain 1330).